The sequence spans 386 residues: S-adenosylmethionine synthase (386 aa).

Histidine 16 contributes to the ATP binding site. Residue aspartate 18 coordinates Mg(2+). A K(+)-binding site is contributed by glutamate 44. Glutamate 57 and glutamine 100 together coordinate L-methionine. Residues 100-110 (QSRDITQGVDR) are flexible loop. ATP-binding positions include 165 to 167 (DAK), aspartate 240, 246 to 247 (RK), alanine 263, and lysine 267. Aspartate 240 contributes to the L-methionine binding site. Lysine 271 is an L-methionine binding site.

It belongs to the AdoMet synthase family. Homotetramer; dimer of dimers. Requires Mg(2+) as cofactor. It depends on K(+) as a cofactor.

The protein localises to the cytoplasm. It catalyses the reaction L-methionine + ATP + H2O = S-adenosyl-L-methionine + phosphate + diphosphate. It participates in amino-acid biosynthesis; S-adenosyl-L-methionine biosynthesis; S-adenosyl-L-methionine from L-methionine: step 1/1. Catalyzes the formation of S-adenosylmethionine (AdoMet) from methionine and ATP. The overall synthetic reaction is composed of two sequential steps, AdoMet formation and the subsequent tripolyphosphate hydrolysis which occurs prior to release of AdoMet from the enzyme. The protein is S-adenosylmethionine synthase of Francisella tularensis subsp. tularensis (strain WY96-3418).